The following is a 374-amino-acid chain: Alanine racemase (374 aa).

Catalysis depends on lysine 35, which acts as the Proton acceptor; specific for D-alanine. N6-(pyridoxal phosphate)lysine is present on lysine 35. Arginine 130 lines the substrate pocket. Tyrosine 261 (proton acceptor; specific for L-alanine) is an active-site residue. Methionine 309 serves as a coordination point for substrate.

It belongs to the alanine racemase family. Pyridoxal 5'-phosphate serves as cofactor.

The catalysed reaction is L-alanine = D-alanine. Its pathway is amino-acid biosynthesis; D-alanine biosynthesis; D-alanine from L-alanine: step 1/1. In terms of biological role, catalyzes the interconversion of L-alanine and D-alanine. May also act on other amino acids. This chain is Alanine racemase (alr), found in Albidiferax ferrireducens (strain ATCC BAA-621 / DSM 15236 / T118) (Rhodoferax ferrireducens).